Here is a 406-residue protein sequence, read N- to C-terminus: Argininosuccinate synthase (406 aa).

Residues 11–19 (AYSGGLDTS) and alanine 38 each bind ATP. The L-citrulline site is built by tyrosine 91 and serine 96. Glycine 121 serves as a coordination point for ATP. Positions 123, 127, and 128 each coordinate L-aspartate. L-citrulline is bound at residue asparagine 127. Residues arginine 131, serine 181, serine 190, glutamate 266, and tyrosine 278 each contribute to the L-citrulline site.

This sequence belongs to the argininosuccinate synthase family. Type 1 subfamily. As to quaternary structure, homotetramer.

It is found in the cytoplasm. It carries out the reaction L-citrulline + L-aspartate + ATP = 2-(N(omega)-L-arginino)succinate + AMP + diphosphate + H(+). The protein operates within amino-acid biosynthesis; L-arginine biosynthesis; L-arginine from L-ornithine and carbamoyl phosphate: step 2/3. This chain is Argininosuccinate synthase, found in Campylobacter curvus (strain 525.92).